The following is a 146-amino-acid chain: Basic phospholipase A2 beta-bungarotoxin A1 chain (146 aa).

The first 19 residues, 1–19 (MNPAHLLVLPAVCVSFLGA), serve as a signal peptide directing secretion. Positions 20 to 27 (SIIPPQSL) are excised as a propeptide. Disulfide bonds link Cys54–Cys145, Cys56–Cys72, Cys71–Cys126, Cys78–Cys119, Cys87–Cys112, and Cys105–Cys117. Positions 55, 57, and 59 each coordinate Ca(2+). Residue His75 is part of the active site. Asp76 provides a ligand contact to Ca(2+). Asp120 is a catalytic residue.

It belongs to the phospholipase A2 family. Group I subfamily. D49 sub-subfamily. As to quaternary structure, heterodimer with beta-bungarotoxin B chain; disulfide-linked. The A chain has phospholipase A2 activity and the B chain shows homology with the basic protease inhibitors. Requires Ca(2+) as cofactor. Expressed by the venom gland.

It localises to the secreted. It catalyses the reaction a 1,2-diacyl-sn-glycero-3-phosphocholine + H2O = a 1-acyl-sn-glycero-3-phosphocholine + a fatty acid + H(+). In terms of biological role, snake venom phospholipase A2 (PLA2) that inhibits neuromuscular transmission by blocking acetylcholine release from the nerve termini. PLA2 catalyzes the calcium-dependent hydrolysis of the 2-acyl groups in 3-sn-phosphoglycerides. The chain is Basic phospholipase A2 beta-bungarotoxin A1 chain from Bungarus flaviceps flaviceps (Red-headed krait).